The chain runs to 857 residues: Median body protein (857 aa).

Coiled coils occupy residues 169 to 546 (HNAL…MRTE) and 571 to 793 (LAHL…TKAM).

The protein resides in the cytoplasm. It is found in the cytoskeleton. In terms of biological role, structural component of the ventral disk involved in maintanance of a domed conformation of the disk required for proper attachment. May have a role in immobilizing the microtubules between cell divisions. The polypeptide is Median body protein (Giardia intestinalis (strain ATCC 50803 / WB clone C6) (Giardia lamblia)).